The chain runs to 614 residues: MCGITGWVDFKKQLVQEKQTMDRMTDTLSKRGPDDSNVWGEHHVLFGHKRLAVVDIEGGRQPMACTYKGDTYTIIYNGELYNTEDLRKELRARGHQFERTSDTEVLLHSYIEWQEDCVDHLNGIFAFAVWDEKRNLLFAARDRLGVKPFFYTKEGSSFLFGSEIKAILAHPDIKARVDRTGLSEIFGLGPSRTPGTGIFKGIKEIRPAHALTFSKDGLNIWRYWNVESEKHTDSFDDTVANVRSLFQDAVTRQLVSDVPVCTFLSGGLDSSAITAIAAGHFEKEGKAPLHTYSIDYEENDKYFQASAFQPNDDGPWIEKMTEAFGTTHHKCVISQKDLVDHLEEAVLVKDLPGMADVDSSLLWFCREIKKDFVVSLSGECADEIFGGYPWFHTADVESGFPWMRSTEERIKLLSDSWQKKLNLKEYVNAKYEETLAETPLLDGETGVDKARRQLFYLNMLWFMTNLLDRKDRMSMGASLEVRVPFADHRLVEYVWNIPWEMKMHDNREKGILRKALEGILPDDILYRKKSPYPKTHHPEYTKGVSEWLKTIRSQKDSVLHTLLDRKQLDQLLETEGSSFKVPWFGQLMKGPQLIAHLAQIHTWFEAYRIDIDER.

Catalysis depends on C2, which acts as the For GATase activity. Residues 2-216 (CGITGWVDFK…PAHALTFSKD (215 aa)) enclose the Glutamine amidotransferase type-2 domain. Residues 50 to 54 (RLAVV), 77 to 79 (NGE), and D102 contribute to the L-glutamine site. 377-378 (SG) serves as a coordination point for ATP.

This sequence belongs to the asparagine synthetase family.

The enzyme catalyses L-aspartate + L-glutamine + ATP + H2O = L-asparagine + L-glutamate + AMP + diphosphate + H(+). Its pathway is amino-acid biosynthesis; L-asparagine biosynthesis; L-asparagine from L-aspartate (L-Gln route): step 1/1. Its function is as follows. Asparagine synthetase involved in sporulation. This Bacillus subtilis (strain 168) protein is Asparagine synthetase [glutamine-hydrolyzing] 3 (asnO).